Here is a 583-residue protein sequence, read N- to C-terminus: SHC-transforming protein 1 (583 aa).

Met1 carries the N-acetylmethionine modification. Disordered stretches follow at residues 1 to 92 (MDLL…DDGE) and 113 to 137 (KLSGGGGRRTRVEGGQLGGEEWTRH). Residues 16–44 (ESLSSLEEGASGSTPPEELPSPSASSLGP) are compositionally biased toward low complexity. A Phosphoserine modification is found at Ser36. Residue Ser139 is modified to Phosphoserine. An N6-acetyllysine modification is found at Lys154. The PID domain occupies 156-339 (MGPGVSYLVR…AGFDGSAWDE (184 aa)). The CH1 stretch occupies residues 340 to 487 (EEEEPPDHQY…SMAEQLRGEP (148 aa)). Phosphotyrosine is present on residues Tyr349 and Tyr350. The tract at residues 372–416 (AAPGAARSTAPSAQTPSHLGATLPVGQPVGGDPEVRKQMPPPPPC) is disordered. Phosphotyrosine is present on Tyr427. Phosphoserine is present on Ser453. Residues 488–579 (WFHGKLSRRE…GSELCLQQPV (92 aa)) form the SH2 domain.

As to quaternary structure, interacts with CPNE3; this interaction may mediate the binding of CPNE3 with ERBB2. Interacts with the Trk receptors NTRK1, NTRK2 and NTRK3; in a phosphotyrosine-dependent manner. Interacts with the NPXY motif of tyrosine-phosphorylated IGF1R and INSR in vitro via the PID domain. Once activated, binds to GRB2. Interacts with tyrosine-phosphorylated CD3T and DDR2. Interacts with the N-terminal region of APS. Interacts with phosphorylated LRP1 and IRS4. Interacts with INPP5D/SHIP1 and INPPL1/SHIP2. Interacts with ALK, GAB2, GRB7 and KIT. Interacts with PTPN6/SHP (tyrosine phosphorylated). Identified in a complex containing FGFR4, NCAM1, CDH2, PLCG1, FRS2, SRC, SHC1, GAP43 and CTTN. Interacts with FLT4 (tyrosine-phosphorylated). Interacts with EPHB1 and GRB2; activates the MAPK/ERK cascade to regulate cell migration. Interacts with PDGFRB (tyrosine-phosphorylated). Interacts with ERBB4. Interacts with TEK/TIE2 (tyrosine-phosphorylated). Interacts with PTK2/FAK1. Interacts with CEACAM1; this interaction is CEACAM1-phosphorylation-dependent and mediates interaction with EGFR or INSR resulting in decrease coupling of SHC1 to the MAPK3/ERK1-MAPK1/ERK2 pathway. Interacts (via PID domain) with PEAK1 (when phosphorylated). Found in a complex with PPP1CA, PPP1CC, SHC1 and PEAK1. Phosphorylated by activated epidermal growth factor receptor. Phosphorylated in response to KIT signaling. Tyrosine phosphorylated in response to FLT3 and FLT4 signaling and by ligand-activated ALK. Tyrosine phosphorylated by ligand-activated PDGFRB. Tyrosine phosphorylated by TEK/TIE2. May be tyrosine phosphorylated by activated PTK2/FAK1. Tyrosine phosphorylated by activated PTK2B/PYK2. Dephosphorylation by PTPN2 may regulate interaction with GRB2.

It localises to the cytoplasm. It is found in the cell junction. The protein localises to the focal adhesion. Functionally, signaling adapter that couples activated growth factor receptors to signaling pathways. Participates in a signaling cascade initiated by activated KIT and KITLG/SCF. Participates in signaling downstream of the angiopoietin receptor TEK/TIE2, and plays a role in the regulation of endothelial cell migration and sprouting angiogenesis. This Pongo abelii (Sumatran orangutan) protein is SHC-transforming protein 1 (SHC1).